The following is a 137-amino-acid chain: Small ribosomal subunit protein bS16 (137 aa).

Belongs to the bacterial ribosomal protein bS16 family.

The sequence is that of Small ribosomal subunit protein bS16 from Leuconostoc citreum (strain KM20).